The primary structure comprises 1230 residues: Serine/threonine-protein kinase PDK1 (1230 aa).

The disordered stretch occupies residues 1–277 (MASSHFGPAS…ASSGALKKHS (277 aa)). Residues 34-50 (SSSSSSRSTTTCSSTSS) are compositionally biased toward low complexity. Over residues 62–76 (ETSTAATSRSQLPSN) the composition is skewed to polar residues. Basic and acidic residues predominate over residues 77–87 (RHSENEAEHDT). Polar residues-rich tracts occupy residues 107–117 (PRSNRLGTSPQ) and 140–175 (SKRQ…SSTI). Residues 185–202 (PNDRLSHDRESHSAERPR) are compositionally biased toward basic and acidic residues. Over residues 217–226 (STPSSPTNSY) the composition is skewed to polar residues. The segment covering 252 to 262 (ARDGDDRERRQ) has biased composition (basic and acidic residues). The 521-residue stretch at 281–801 (WVLGEELGVG…ITFIKTHPFF (521 aa)) folds into the Protein kinase domain. ATP-binding positions include 291–293 (SYS) and Lys319. 2 disordered regions span residues 345 to 522 (LSDP…RSGA) and 534 to 597 (TLPP…KMSA). Composition is skewed to polar residues over residues 378 to 397 (TASI…TVSN) and 408 to 433 (IVTT…SPTA). Basic and acidic residues-rich tracts occupy residues 466-494 (GGED…DNMT) and 502-521 (VREE…ERSG). The span at 535–544 (LPPPQIPSTP) shows a compositional bias: pro residues. Basic and acidic residues predominate over residues 555-569 (DGHRTSRETPRDRPH). ATP-binding positions include 621 to 623 (SLA) and Glu627. Asp666 serves as the catalytic Proton acceptor. The ATP site is built by Glu670 and Asp684. Positions 850–859 (EDEDGFEYDA) are enriched in acidic residues. Disordered stretches follow at residues 850–871 (EDED…GGAV), 907–955 (LGED…GGNR), 972–1035 (GGGM…SDEA), and 1116–1152 (EADG…GGGH). The span at 927–942 (GKREKEVEKKKGEKAR) shows a compositional bias: basic and acidic residues. Composition is skewed to low complexity over residues 977–992 (GSAT…RTPG), 1002–1030 (RPGS…GASM), and 1120–1137 (DPAG…SHVE). Over residues 1138–1152 (SGGGGVGGGGRGGGH) the composition is skewed to gly residues.

Belongs to the protein kinase superfamily. AGC Ser/Thr protein kinase family. PDPK1 subfamily.

The catalysed reaction is L-seryl-[protein] + ATP = O-phospho-L-seryl-[protein] + ADP + H(+). It carries out the reaction L-threonyl-[protein] + ATP = O-phospho-L-threonyl-[protein] + ADP + H(+). Its function is as follows. Serine/threonine-protein kinase that functions in the sphingolipid-mediated signaling pathway, regulating organization of the plasma membrane. May phosphorylate PKC1 to activate the cell integrity MAPK cascade during cell wall and membrane stress. May regulate sphingolipid metabolism upstream of YPK1. The protein is Serine/threonine-protein kinase PDK1 of Cryptococcus neoformans var. grubii serotype A (strain H99 / ATCC 208821 / CBS 10515 / FGSC 9487) (Filobasidiella neoformans var. grubii).